The sequence spans 488 residues: Kynurenine 3-monooxygenase 2 (488 aa).

The protein belongs to the aromatic-ring hydroxylase family. KMO subfamily. FAD serves as cofactor.

The protein resides in the mitochondrion outer membrane. The enzyme catalyses L-kynurenine + NADPH + O2 + H(+) = 3-hydroxy-L-kynurenine + NADP(+) + H2O. It participates in cofactor biosynthesis; NAD(+) biosynthesis; quinolinate from L-kynurenine: step 1/3. In terms of biological role, catalyzes the hydroxylation of L-kynurenine (L-Kyn) to form 3-hydroxy-L-kynurenine (L-3OHKyn). Required for synthesis of quinolinic acid. This chain is Kynurenine 3-monooxygenase 2 (bna4-2), found in Aspergillus niger (strain ATCC MYA-4892 / CBS 513.88 / FGSC A1513).